Reading from the N-terminus, the 171-residue chain is Ribosome maturation factor RimM (171 aa).

The 73-residue stretch at 97-169 (DGEFYYHEII…RVDVDIMEGL (73 aa)) folds into the PRC barrel domain.

This sequence belongs to the RimM family. Binds ribosomal protein uS19.

It is found in the cytoplasm. An accessory protein needed during the final step in the assembly of 30S ribosomal subunit, possibly for assembly of the head region. Essential for efficient processing of 16S rRNA. May be needed both before and after RbfA during the maturation of 16S rRNA. It has affinity for free ribosomal 30S subunits but not for 70S ribosomes. The polypeptide is Ribosome maturation factor RimM (Lactococcus lactis subsp. cremoris (strain SK11)).